Here is a 315-residue protein sequence, read N- to C-terminus: Malate dehydrogenase (315 aa).

9–15 (GGSGNVG) serves as a coordination point for NAD(+). Positions 84 and 90 each coordinate substrate. NAD(+) is bound by residues N97 and 120-122 (VSN). Residues N122 and R153 each coordinate substrate. H177 functions as the Proton acceptor in the catalytic mechanism.

The protein belongs to the LDH/MDH superfamily.

It carries out the reaction (S)-malate + NAD(+) = oxaloacetate + NADH + H(+). In terms of biological role, catalyzes the reversible oxidation of malate to oxaloacetate. The protein is Malate dehydrogenase of Helicobacter hepaticus (strain ATCC 51449 / 3B1).